We begin with the raw amino-acid sequence, 947 residues long: DNA topoisomerase 1 (947 aa).

The Toprim domain maps to 16–140 (RRLVIVESPT…VKRMVFHEIT (125 aa)). Mg(2+) contacts are provided by Glu-22 and Asp-109. A Topo IA-type catalytic domain is found at 155-614 (DIDLVDAQET…FYFGGNHGVS (460 aa)). Positions 189 to 194 (SAGRVQ) are interaction with DNA. The O-(5'-phospho-DNA)-tyrosine intermediate role is filled by Tyr-343. Disordered regions lie at residues 733-771 (VLPKHDDDYGAADQGTKKTKKGRRASASQGPKPRTGSLL), 846-888 (KRAG…GETN), and 910-947 (ADRRARGPVKRPAKKARKVPAKKAARLAPARGISQSPR). Residues 915 to 934 (RGPVKRPAKKARKVPAKKAA) show a composition bias toward basic residues.

This sequence belongs to the type IA topoisomerase family. Monomer. Mg(2+) serves as cofactor.

It carries out the reaction ATP-independent breakage of single-stranded DNA, followed by passage and rejoining.. Releases the supercoiling and torsional tension of DNA, which is introduced during the DNA replication and transcription, by transiently cleaving and rejoining one strand of the DNA duplex. Introduces a single-strand break via transesterification at a target site in duplex DNA. The scissile phosphodiester is attacked by the catalytic tyrosine of the enzyme, resulting in the formation of a DNA-(5'-phosphotyrosyl)-enzyme intermediate and the expulsion of a 3'-OH DNA strand. The free DNA strand then undergoes passage around the unbroken strand, thus removing DNA supercoils. Finally, in the religation step, the DNA 3'-OH attacks the covalent intermediate to expel the active-site tyrosine and restore the DNA phosphodiester backbone. This Mycobacterium leprae (strain TN) protein is DNA topoisomerase 1.